A 139-amino-acid chain; its full sequence is D-ribose pyranase (139 aa).

His-20 (proton donor) is an active-site residue. Residues Asp-28, His-106, and 128 to 130 each bind substrate; that span reads YAN.

It belongs to the RbsD / FucU family. RbsD subfamily. In terms of assembly, homodecamer.

Its subcellular location is the cytoplasm. The enzyme catalyses beta-D-ribopyranose = beta-D-ribofuranose. The protein operates within carbohydrate metabolism; D-ribose degradation; D-ribose 5-phosphate from beta-D-ribopyranose: step 1/2. In terms of biological role, catalyzes the interconversion of beta-pyran and beta-furan forms of D-ribose. In Aliivibrio fischeri (strain ATCC 700601 / ES114) (Vibrio fischeri), this protein is D-ribose pyranase.